The primary structure comprises 446 residues: Argininosuccinate synthase (446 aa).

ATP is bound by residues 17–25 (AFSGGLDTS) and Ala43. Tyr99 contributes to the L-citrulline binding site. ATP contacts are provided by Gly129 and Thr131. L-aspartate is bound by residues Thr131, Asn135, and Asp136. Asn135 serves as a coordination point for L-citrulline. Asp136 serves as a coordination point for ATP. L-citrulline-binding residues include Arg139 and Ser192. Position 194 (Asp194) interacts with ATP. L-citrulline contacts are provided by Thr201, Glu203, and Glu280.

Belongs to the argininosuccinate synthase family. Type 2 subfamily. Homotetramer.

Its subcellular location is the cytoplasm. It catalyses the reaction L-citrulline + L-aspartate + ATP = 2-(N(omega)-L-arginino)succinate + AMP + diphosphate + H(+). Its pathway is amino-acid biosynthesis; L-arginine biosynthesis; L-arginine from L-ornithine and carbamoyl phosphate: step 2/3. This is Argininosuccinate synthase from Polaromonas sp. (strain JS666 / ATCC BAA-500).